Here is a 644-residue protein sequence, read N- to C-terminus: Replication protein E1 (644 aa).

The Nuclear localization signal motif lies at 86 to 88 (KRK). The segment at 179-345 (CENVTLQEIS…LTVLQHSFND (167 aa)) is DNA-binding region. Residues 312–644 (LYWFRTAMSN…AGENTRSLRS (333 aa)) form a required for E2 binding region. In terms of domain architecture, SF3 helicase spans 444–594 (IEFTAFLGAF…FPFDENGNPV (151 aa)). 470-477 (GPANTGKS) serves as a coordination point for ATP. Lys-551 is covalently cross-linked (Glycyl lysine isopeptide (Lys-Gly) (interchain with G-Cter in SUMO)).

The protein belongs to the papillomaviridae E1 protein family. As to quaternary structure, can form hexamers. Interacts with E2 protein; this interaction increases E1 DNA binding specificity. Interacts with host DNA polymerase subunit POLA2. Interacts with host single stranded DNA-binding protein RPA1. Interacts with host TOP1; this interaction stimulates the enzymatic activity of TOP1. Post-translationally, phosphorylated. Sumoylated.

The protein localises to the host nucleus. It catalyses the reaction Couples ATP hydrolysis with the unwinding of duplex DNA by translocating in the 3'-5' direction.. The enzyme catalyses ATP + H2O = ADP + phosphate + H(+). ATP-dependent DNA 3'-5' helicase required for initiation of viral DNA replication. It forms a complex with the viral E2 protein. The E1-E2 complex binds to the replication origin which contains binding sites for both proteins. During the initial step, a dimer of E1 interacts with a dimer of protein E2 leading to a complex that binds the viral origin of replication with high specificity. Then, a second dimer of E1 displaces the E2 dimer in an ATP-dependent manner to form the E1 tetramer. Following this, two E1 monomers are added to each half of the site, which results in the formation of two E1 trimers on the viral ori. Subsequently, two hexamers will be created. The double hexamer acts as a bi-directional helicase machinery and unwinds the viral DNA and then recruits the host DNA polymerase to start replication. In Human papillomavirus 33, this protein is Replication protein E1.